A 350-amino-acid chain; its full sequence is C5a anaphylatoxin chemotactic receptor 1 (350 aa).

The Extracellular segment spans residues 1–37 (MDSFNYTTPDYGHYDDKDTLDLNTPVDKTSNTLRVPD). Asn-5 is a glycosylation site (N-linked (GlcNAc...) asparagine). The interval 10 to 18 (DYGHYDDKD) is required for CHIPS binding. Sulfotyrosine occurs at positions 11 and 14. The segment at 21–30 (DLNTPVDKTS) is involved in C5a binding. Residues 38–64 (ILALVIFAVVFLVGVLGNALVVWVTAF) traverse the membrane as a helical segment. The Cytoplasmic portion of the chain corresponds to 65–69 (EAKRT). A helical membrane pass occupies residues 70–93 (INAIWFLNLAVADFLSCLALPILF). Over 94 to 110 (TSIVQHHHWPFGGAACS) the chain is Extracellular. Cys-109 and Cys-188 are disulfide-bonded. Residues 111 to 132 (ILPSLILLNMYASILLLATISA) form a helical membrane-spanning segment. Topologically, residues 133 to 153 (DRFLLVFKPIWCQNFRGAGLA) are cytoplasmic. A helical membrane pass occupies residues 154-174 (WIACAVAWGLALLLTIPSFLY). The Extracellular segment spans residues 175–200 (RVVREEYFPPKVLCGVDYSHDKRRER). Residues 201–226 (AVAIVRLVLGFLWPLLTLTICYTFIL) traverse the membrane as a helical segment. Over 227-242 (LRTWSRRATRSTKTLK) the chain is Cytoplasmic. The chain crosses the membrane as a helical span at residues 243 to 265 (VVVAVVASFFIFWLPYQVTGIMM). Over 266–282 (SFLEPSSPTFLLLKKLD) the chain is Extracellular. The helical transmembrane segment at 283–303 (SLCVSFAYINCCINPIIYVVA) threads the bilayer. Over 304–350 (GQGFQGRLRKSLPSLLRNVLTEESVVRESKSFTRSTVDTMAQKTQAV) the chain is Cytoplasmic. A phosphoserine mark is found at Ser-314, Ser-317, Ser-327, Ser-332, Ser-334, and Ser-338.

It belongs to the G-protein coupled receptor 1 family. In terms of assembly, homodimer. May also form higher-order oligomers. Interacts (when phosphorylated) with ARRB1 and ARRB2; the interaction is associated with internalization of C5aR. Interacts (via N-terminal domain) with S.aureus chemotaxis inhibitory protein (CHIPS); the interaction blocks the receptor and may thus inhibit the immune response. In terms of processing, sulfation plays a critical role in the association of C5aR with C5a, but no significant role in the ability of the receptor to transduce a signal and mobilize calcium in response to a small a small peptide agonist. Sulfation at Tyr-14 is important for CHIPS binding. Post-translationally, phosphorylated on serine residues in response to C5a binding, resulting in internalization of the receptor and short-term desensitization to the ligand. The key residues involved in this process are Ser-334 and Ser-338.

It is found in the cell membrane. It localises to the cytoplasmic vesicle. Receptor for the chemotactic and inflammatory peptide anaphylatoxin C5a. The ligand interacts with at least two sites on the receptor: a high-affinity site on the extracellular N-terminus, and a second site in the transmembrane region which activates downstream signaling events. Receptor activation stimulates chemotaxis, granule enzyme release, intracellular calcium release and superoxide anion production. In Homo sapiens (Human), this protein is C5a anaphylatoxin chemotactic receptor 1 (C5AR1).